The chain runs to 121 residues: NADH-quinone oxidoreductase subunit A (121 aa).

3 helical membrane passes run 8–28 (YLPIFMQMGLAVGFVVLTIIG), 65–85 (LVAILFVLFDVEVIFLYPWAI), and 93–113 (QGMIKMVIFMSLLLVGFFYII).

The protein belongs to the complex I subunit 3 family. As to quaternary structure, NDH-1 is composed of 14 different subunits. Subunits NuoA, H, J, K, L, M, N constitute the membrane sector of the complex.

Its subcellular location is the cell inner membrane. It carries out the reaction a quinone + NADH + 5 H(+)(in) = a quinol + NAD(+) + 4 H(+)(out). Functionally, NDH-1 shuttles electrons from NADH, via FMN and iron-sulfur (Fe-S) centers, to quinones in the respiratory chain. The immediate electron acceptor for the enzyme in this species is believed to be a menaquinone. Couples the redox reaction to proton translocation (for every two electrons transferred, four hydrogen ions are translocated across the cytoplasmic membrane), and thus conserves the redox energy in a proton gradient. The sequence is that of NADH-quinone oxidoreductase subunit A from Flavobacterium psychrophilum (strain ATCC 49511 / DSM 21280 / CIP 103535 / JIP02/86).